The chain runs to 504 residues: Cobyric acid synthase (504 aa).

Positions 251 to 448 (DITIAIVQLP…LHGLFDSDAF (198 aa)) constitute a GATase cobBQ-type domain. Catalysis depends on C332, which acts as the Nucleophile. H440 is a catalytic residue.

Belongs to the CobB/CobQ family. CobQ subfamily.

Its pathway is cofactor biosynthesis; adenosylcobalamin biosynthesis. Its function is as follows. Catalyzes amidations at positions B, D, E, and G on adenosylcobyrinic A,C-diamide. NH(2) groups are provided by glutamine, and one molecule of ATP is hydrogenolyzed for each amidation. In Salmonella gallinarum (strain 287/91 / NCTC 13346), this protein is Cobyric acid synthase.